A 1408-amino-acid chain; its full sequence is MKDLLKFLKAQTKTEEFDAIKIALASPDMIRSWSFGEVKKPETINYRTFKPERDGLFCARIFGPVKDYECLCGKYKRLKHRGVICEKCGVEVTQTKVRRERMGHIELASPTAHIWFLKSLPSRIGLLLDMPLRDIERVLYFESYVVIEGGMTNLERRQILTEEQYLDALEEFGDEFDAKMGAEAIQALLKNMDLEQECETLREELNETNSETKRKKLTKRIKLLEAFVQSGNKPEWMILTVLPVLPPDLRPLVPLDGGRFATSDLNDLYRRVINRNNRLKRLLDLAAPDIIVRNEKRMLQEAVDALLDNGRRGRAITGSNKRPLKSLADMIKGKQGRFRQNLLGKRVDYSGRSVITVGPYLRLHQCGLPKKMALELFKPFIYGKLELRGLATTIKAAKKMVEREEAVVWDILDEVIREHPVLLNRAPTLHRLGIQAFEPVLIEGKAIQLHPLVCAAYNADFDGDQMAVHVPLTLEAQLEARALMMSTNNILSPANGEPIIVPSQDVVLGLYYMTRDCVNAKGEGMVLSGPKEAERIYRAGLASLHARVKVRITEEIKNTEGESVHQTSIVDTTVGRAILWMIVPRGLPYSIVNQPLGKKAISKMLNTCYRILGLKPTVIFADQIMYTGFAYAARSGASVGIDDMVIPAKKAEIIEEAETEVAEIQEQFQSGLVTAGERYNKVIDIWAAANERVAKAMMENLSVEDVVNRDGVVEQQVSFNSIFMMADSGARGSAAQIRQLAGMRGLMAKPDGSIIETPITANFREGLNVLQYFISTHGARKGLADTALKTANSGYLTRRLVDVAQDLVVTEDDCGTHNGIMMTPVIEGGDVKEPLRERVLGRVTAEDIIKPGTADILVPRNTLLHEKTCDLLEENSVDSVKVRSVVSCETDFGVCANCYGRDLARGHIINKGEAIGVIAAQSIGEPGTQLTMRTFHIGGAASRAAAESSIQVKNKGTLKLSNVKFVMNAAGKLVITSRNTELKLIDEFGRTKERYKVPYGSVMGKGDGMEVNGGETVANWDPHTMPVITEVSGFIRFADMVDGQTITRQTDELTGLSSLVVLDSAERTGSGKDLRPALKIVDAKGDDVLIPGTDMPAQYFLPGKAIVQLEDGIQIGAGDTLARIPQESGGTKDITGGLPRVADLFEARRPKEPAILAEISGIISFGKETKGKRRLVISPLDGSDAYEEMIPKWRQLNVFEGEVVERGDVVSDGPESPHDILRLRGVHAVTRYITNEVQEVYRLQGVKINDKHIEVIVRQMLRKGTIVSAGGTEFLEGEQAEVSRVKIANRQLAAEGKIEATFSRDLLGITKASLATESFISAASFQETTRVLTEAAVAGKRDELRGLKENVIVGRLIPAGTGYAYHQDRMRRKAQGETPVVPQVSAEEATANLAELLNAGNLGGGNND.

C70, C72, C85, and C88 together coordinate Zn(2+). The Mg(2+) site is built by D460, D462, and D464. The Zn(2+) site is built by C814, C888, C895, and C898.

This sequence belongs to the RNA polymerase beta' chain family. As to quaternary structure, the RNAP catalytic core consists of 2 alpha, 1 beta, 1 beta' and 1 omega subunit. When a sigma factor is associated with the core the holoenzyme is formed, which can initiate transcription. Mg(2+) serves as cofactor. Requires Zn(2+) as cofactor.

The catalysed reaction is RNA(n) + a ribonucleoside 5'-triphosphate = RNA(n+1) + diphosphate. In terms of biological role, DNA-dependent RNA polymerase catalyzes the transcription of DNA into RNA using the four ribonucleoside triphosphates as substrates. This is DNA-directed RNA polymerase subunit beta' from Serratia proteamaculans (strain 568).